A 593-amino-acid polypeptide reads, in one-letter code: METPPLPPACTKQGHQKPLDSKDDNTEKHCPVTVNPWHMKKAFKVMNELRSQNLLCDVTIVAEDMEISAHRVVLAACSPYFHAMFTGEMSESRAKRVRIKEVDGWTLRMLIDYVYTAEIQVTEENVQVLLPAAGLLQLQDVKKTCCEFLESQLHPVNCLGIRAFADMHACTDLLNKANTYAEQHFADVVLSEEFLNLGIEQVCSLISSDKLTISSEEKVFEAVIAWVNHDKDVRQEFMARLMEHVRLPLLPREYLVQRVEEEALVKNSSACKDYLIEAMKYHLLPTEQRILMKSVRTRLRTPMNLPKLMVVVGGQAPKAIRSVECYDFKEERWHQVAELPSRRCRAGMVYMAGLVFAVGGFNGSLRVRTVDSYDPVKDQWTSVANMRDRRSTLGAAVLNGLLYAVGGFDGSTGLSSVEAYNIKSNEWFHVAPMNTRRSSVGVGVVGGLLYAVGGYDGASRQCLSTVECYNATTNEWTYIAEMSTRRSGAGVGVLNNLLYAVGGHDGPLVRKSVEVYDPTTNAWRQVADMNMCRRNAGVCAVNGLLYVVGGDDGSCNLASVEYYNPTTDKWTVVSSCMSTGRSYAGVTVIDKPL.

The interval 1–28 (METPPLPPACTKQGHQKPLDSKDDNTEK) is disordered. Basic and acidic residues predominate over residues 17–28 (KPLDSKDDNTEK). Residues 56–123 (CDVTIVAEDM…VYTAEIQVTE (68 aa)) enclose the BTB domain. Kelch repeat units lie at residues 308 to 353 (LMVV…YMAG), 354 to 400 (LVFA…VLNG), 402 to 447 (LYAV…VVGG), 449 to 496 (LYAV…VLNN), 497 to 543 (LLYA…AVNG), and 545 to 591 (LYVV…VIDK).

In terms of assembly, component of the BCR(KLHL2) E3 ubiquitin ligase complex, at least composed of CUL3 and KLHL2 and RBX1. Binds actin. Interacts with KLHL12. Interacts (via N-terminus) with FYN (via SH3 domain). In terms of tissue distribution, ubiquitous. Detected throughout the brain.

The protein localises to the cytoplasm. Its subcellular location is the cytoskeleton. It is found in the cell projection. The protein resides in the ruffle. It localises to the lamellipodium. The protein localises to the cytosol. The protein operates within protein modification; protein ubiquitination. Substrate-specific adapter of a BCR (BTB-CUL3-RBX1) E3 ubiquitin ligase complex that mediates the ubiquitination of target proteins, such as NPTXR, WNK1, WNK3 and WNK4, leading most often to their proteasomal degradation. The BCR(KLHL2) complex catalyzes ubiquitination and degradation of NPTXR. Responsible for degradative ubiquitination of the WNK kinases WNK1, WNK3 and WNK4. Plays a role in the reorganization of the actin cytoskeleton. Promotes growth of cell projections in oligodendrocyte precursors. The protein is Kelch-like protein 2 of Homo sapiens (Human).